Reading from the N-terminus, the 536-residue chain is Hydroxylamine oxidoreductase (536 aa).

Positions 1–26 (MFEIFKKPLSRIVGATFAFAGVTLLA) are cleaved as a signal peptide. Residues Cys-116, Cys-119, His-120, His-136, Cys-160, Cys-163, His-164, His-168, Cys-179, Cys-182, His-183, His-198, Cys-223, Cys-226, His-227, Cys-234, Cys-237, His-238, His-241, Cys-254, Cys-257, and His-258 each coordinate heme c. His-263 is a binding site for hydroxylamine. 10 residues coordinate heme c: His-274, Cys-301, Cys-304, His-305, His-311, Cys-346, Cys-349, His-350, His-443, and Tyr-451.

In terms of assembly, homotrimer; subunits are linked by two covalent bonds between Tyr-451 of one subunit and heme P460 of an adjacent subunit. It depends on heme c as a cofactor.

It localises to the anammoxosome. The catalysed reaction is hydroxylamine + 3 Fe(III)-[cytochrome c] = nitric oxide + 3 Fe(II)-[cytochrome c] + 3 H(+). In terms of biological role, catalyzes the oxidation of hydroxylamine to nitric oxide with cytochrome c acting as an electron acceptor. Does not oxidize hydroxylamine to nitrite. Also able to catalyze the four-electron oxidation of hydrazine to N(2) in vitro with reduced efficiency; however, this reaction is probably not physiological. This chain is Hydroxylamine oxidoreductase, found in Kuenenia stuttgartiensis.